Here is a 99-residue protein sequence, read N- to C-terminus: Protein S100-Z (99 aa).

2 EF-hand domains span residues 13–48 (IRIF…FLSC) and 50–85 (KETQ…LTVA). S20, E23, K28, E33, D63, N65, D67, E69, and E74 together coordinate Ca(2+).

Belongs to the S-100 family. Homodimer. Interacts with S100P. In terms of tissue distribution, highest level of expression in spleen and leukocytes.

The sequence is that of Protein S100-Z from Homo sapiens (Human).